The sequence spans 621 residues: tRNA uridine 5-carboxymethylaminomethyl modification enzyme MnmG (621 aa).

Residue 8–13 (GAGHAG) participates in FAD binding. Positions 199-227 (PRIDRRSVDYSRVEEQKGDENPPPFSFST) are disordered. A compositionally biased stretch (basic and acidic residues) spans 200–218 (RIDRRSVDYSRVEEQKGDE). 269 to 283 (GPRYCPSIEDKIFRF) contributes to the NAD(+) binding site.

The protein belongs to the MnmG family. In terms of assembly, homodimer. Heterotetramer of two MnmE and two MnmG subunits. The cofactor is FAD.

Its subcellular location is the cytoplasm. Its function is as follows. NAD-binding protein involved in the addition of a carboxymethylaminomethyl (cmnm) group at the wobble position (U34) of certain tRNAs, forming tRNA-cmnm(5)s(2)U34. The chain is tRNA uridine 5-carboxymethylaminomethyl modification enzyme MnmG from Chlorobium luteolum (strain DSM 273 / BCRC 81028 / 2530) (Pelodictyon luteolum).